The primary structure comprises 556 residues: CDP-diacylglycerol--glycerol-3-phosphate 3-phosphatidyltransferase, mitochondrial (556 aa).

Residues 1-28 (MAAAAAAAAGPVFWRRLLGLLPGRPGLA) constitute a mitochondrion transit peptide. Serine 49 carries the post-translational modification Phosphoserine. ATP is bound at residue 124-131 (ASLYLGIG). PLD phosphodiesterase domains follow at residues 215–241 (TIGLQHIKVYLFDNNVILSGANLSDSY) and 419–457 (FGAKGVAGAIPAAYVHIERQFYSEVCSLGQQERVQLQEY). Residues histidine 220, lysine 222, and aspartate 227 contribute to the active site.

It belongs to the CDP-alcohol phosphatidyltransferase class-II family.

Its subcellular location is the mitochondrion. The catalysed reaction is a CDP-1,2-diacyl-sn-glycerol + sn-glycerol 3-phosphate = a 1,2-diacyl-sn-glycero-3-phospho-(1'-sn-glycero-3'-phosphate) + CMP + H(+). It functions in the pathway phospholipid metabolism; phosphatidylglycerol biosynthesis; phosphatidylglycerol from CDP-diacylglycerol: step 1/2. Its activity is regulated as follows. Activated by calcium and magnesium and inhibited by other bivalent cations. In terms of biological role, functions in the biosynthesis of the anionic phospholipids phosphatidylglycerol and cardiolipin. In Bos taurus (Bovine), this protein is CDP-diacylglycerol--glycerol-3-phosphate 3-phosphatidyltransferase, mitochondrial (PGS1).